The chain runs to 94 residues: Small ribosomal subunit protein uS19 (94 aa).

The protein belongs to the universal ribosomal protein uS19 family.

Functionally, protein S19 forms a complex with S13 that binds strongly to the 16S ribosomal RNA. This is Small ribosomal subunit protein uS19 from Hamiltonella defensa subsp. Acyrthosiphon pisum (strain 5AT).